Reading from the N-terminus, the 116-residue chain is Non-specific lipid-transfer protein C, cotyledon-specific isoform (116 aa).

The first 24 residues, methionine 1–alanine 24, serve as a signal peptide directing secretion. 4 disulfides stabilise this stretch: cysteine 28–cysteine 76, cysteine 38–cysteine 53, cysteine 54–cysteine 98, and cysteine 74–cysteine 112.

Belongs to the plant LTP family.

Its function is as follows. Plant non-specific lipid-transfer proteins transfer phospholipids as well as galactolipids across membranes. May play a role in wax or cutin deposition in the cell walls of expanding epidermal cells and certain secretory tissues. This Ricinus communis (Castor bean) protein is Non-specific lipid-transfer protein C, cotyledon-specific isoform.